The chain runs to 343 residues: NADH-ubiquinone oxidoreductase chain 1 (343 aa).

The next 8 membrane-spanning stretches (helical) occupy residues L4–L24, A70–Y90, L106–G126, F154–S174, V177–A197, V224–L244, G278–V298, and T316–L336.

This sequence belongs to the complex I subunit 1 family.

The protein resides in the mitochondrion inner membrane. The catalysed reaction is a ubiquinone + NADH + 5 H(+)(in) = a ubiquinol + NAD(+) + 4 H(+)(out). Functionally, core subunit of the mitochondrial membrane respiratory chain NADH dehydrogenase (Complex I) that is believed to belong to the minimal assembly required for catalysis. Complex I functions in the transfer of electrons from NADH to the respiratory chain. The immediate electron acceptor for the enzyme is believed to be ubiquinone. The sequence is that of NADH-ubiquinone oxidoreductase chain 1 (ND1) from Trichophyton rubrum (Athlete's foot fungus).